The sequence spans 469 residues: Cholesterol 7-desaturase nvd (469 aa).

The N-terminal stretch at 1–25 (MASFCASKFLPGLLMLGLGLAVALA) is a signal peptide. Residues 58 to 78 (NFVASQTLLTLTIFGVASFIL) traverse the membrane as a helical segment. Positions 132 to 238 (IPLVASQDLV…VIEQNGFVLV (107 aa)) constitute a Rieske domain. [2Fe-2S] cluster contacts are provided by C172, H174, C192, and H195.

It belongs to the cholesterol 7-desaturase family. It depends on [2Fe-2S] cluster as a cofactor.

Its subcellular location is the membrane. The catalysed reaction is cholesterol + NADPH + O2 + H(+) = 7-dehydrocholesterol + NADP(+) + 2 H2O. The enzyme catalyses cholesterol + NADH + O2 + H(+) = 7-dehydrocholesterol + NAD(+) + 2 H2O. It functions in the pathway steroid hormone biosynthesis; dafachronic acid biosynthesis. Catalyzes the production of 7-dehydrocholesterol (7-DHC or cholesta-5,7-dien-3beta-ol) by inserting a double bond (desaturating) at the C7-C8 single bond of cholesterol. Essential regulator of steroid biosynthesis as this reaction is the first step in the synthesis of the steroid hormone Delta(7)-dafachronic acid. This is Cholesterol 7-desaturase nvd from Hemicentrotus pulcherrimus (Sea urchin).